Reading from the N-terminus, the 122-residue chain is UPF0102 protein CA_C1763 (122 aa).

It belongs to the UPF0102 family.

This Clostridium acetobutylicum (strain ATCC 824 / DSM 792 / JCM 1419 / IAM 19013 / LMG 5710 / NBRC 13948 / NRRL B-527 / VKM B-1787 / 2291 / W) protein is UPF0102 protein CA_C1763.